The chain runs to 445 residues: Tubulin beta-7 chain (445 aa).

Residues glutamine 11, glutamate 69, serine 138, glycine 142, threonine 143, glycine 144, asparagine 204, and asparagine 226 each coordinate GTP. A Mg(2+)-binding site is contributed by glutamate 69. Positions 421-445 (EYQQYQDATAEDEEYEEEEEEEEET) are disordered. Acidic residues predominate over residues 429 to 445 (TAEDEEYEEEEEEEEET).

Belongs to the tubulin family. As to quaternary structure, dimer of alpha and beta chains. A typical microtubule is a hollow water-filled tube with an outer diameter of 25 nm and an inner diameter of 15 nM. Alpha-beta heterodimers associate head-to-tail to form protofilaments running lengthwise along the microtubule wall with the beta-tubulin subunit facing the microtubule plus end conferring a structural polarity. Microtubules usually have 13 protofilaments but different protofilament numbers can be found in some organisms and specialized cells. Mg(2+) serves as cofactor.

Its subcellular location is the cytoplasm. It localises to the cytoskeleton. In terms of biological role, tubulin is the major constituent of microtubules, a cylinder consisting of laterally associated linear protofilaments composed of alpha- and beta-tubulin heterodimers. Microtubules grow by the addition of GTP-tubulin dimers to the microtubule end, where a stabilizing cap forms. Below the cap, tubulin dimers are in GDP-bound state, owing to GTPase activity of alpha-tubulin. This chain is Tubulin beta-7 chain (TUBB7), found in Zea mays (Maize).